The chain runs to 205 residues: uncharacterized protein (205 aa).

The protein to M.jannaschii MJ0638 and MJ1252 and M.tuberculosis Rv2003c.

This is an uncharacterized protein from Methanocaldococcus jannaschii (strain ATCC 43067 / DSM 2661 / JAL-1 / JCM 10045 / NBRC 100440) (Methanococcus jannaschii).